The following is a 186-amino-acid chain: Ribosome-recycling factor (186 aa).

The protein belongs to the RRF family.

It is found in the cytoplasm. Functionally, responsible for the release of ribosomes from messenger RNA at the termination of protein biosynthesis. May increase the efficiency of translation by recycling ribosomes from one round of translation to another. In Pediococcus pentosaceus (strain ATCC 25745 / CCUG 21536 / LMG 10740 / 183-1w), this protein is Ribosome-recycling factor.